Reading from the N-terminus, the 170-residue chain is UPF0201 protein MJ1564 (170 aa).

The span at 133-148 shows a compositional bias: acidic residues; that stretch reads NEDELEEEEEKEDSEE. The tract at residues 133-170 is disordered; that stretch reads NEDELEEEEEKEDSEEIKEGHKEENNLKIKVIDNSSGD. Residues 149 to 163 show a composition bias toward basic and acidic residues; sequence IKEGHKEENNLKIKV.

This sequence belongs to the UPF0201 family.

This Methanocaldococcus jannaschii (strain ATCC 43067 / DSM 2661 / JAL-1 / JCM 10045 / NBRC 100440) (Methanococcus jannaschii) protein is UPF0201 protein MJ1564.